The following is an 87-amino-acid chain: Cell division topological specificity factor (87 aa).

The protein belongs to the MinE family.

Its function is as follows. Prevents the cell division inhibition by proteins MinC and MinD at internal division sites while permitting inhibition at polar sites. This ensures cell division at the proper site by restricting the formation of a division septum at the midpoint of the long axis of the cell. The protein is Cell division topological specificity factor of Vibrio vulnificus (strain CMCP6).